We begin with the raw amino-acid sequence, 1017 residues long: Probable calcium-transporting ATPase 8, plasma membrane-type (1017 aa).

The Cytoplasmic portion of the chain corresponds to 1–153 (MEKLDRYLQE…FVWDAFQDMT (153 aa)). 2 helical membrane passes run 154–174 (LIIL…TEGW) and 177–197 (GMYD…VTAV). The Cytoplasmic segment spans residues 198–228 (SDYKQSLQFKELDNEKKKIFIHVTRDGRRQK). The next 2 helical transmembrane spans lie at 229-249 (ISIY…DQVP) and 331-351 (VATV…LVLL). The Cytoplasmic portion of the chain corresponds to 352 to 384 (VRFLIDKGMTVGLLKWYSTDALTIVNYFATAVT). A helical transmembrane segment spans residues 385 to 405 (IIVVAVPEGLPLAVTLSLAFA). The active-site 4-aspartylphosphate intermediate is the aspartate 434. Positions 736 and 740 each coordinate Mg(2+). A helical transmembrane segment spans residues 803–823 (IVALVINFVSACITGSAPLTA). Residues 824–825 (VQ) are Cytoplasmic-facing. The next 2 membrane-spanning stretches (helical) occupy residues 826–846 (LLWV…TEPP) and 875–895 (SLYQ…LLNI). Topologically, residues 896–938 (KGADSKSIINTLIFNSFVFCQVFNEINSREMQKINVFRGIISN) are cytoplasmic. 2 consecutive transmembrane segments (helical) span residues 939 to 959 (WIFI…IEFL) and 973 to 993 (WLLS…LKCI). At 994 to 1017 (PVGSGETSATPNGYRPLANGPDDI) the chain is on the cytoplasmic side.

This sequence belongs to the cation transport ATPase (P-type) (TC 3.A.3) family. Type IIB subfamily.

The protein localises to the membrane. The catalysed reaction is Ca(2+)(in) + ATP + H2O = Ca(2+)(out) + ADP + phosphate + H(+). With respect to regulation, activated by calmodulin. Its function is as follows. This magnesium-dependent enzyme catalyzes the hydrolysis of ATP coupled with the translocation of calcium from the cytosol out of the cell, into the endoplasmic reticulum, or into organelles. This Oryza sativa subsp. japonica (Rice) protein is Probable calcium-transporting ATPase 8, plasma membrane-type.